Here is a 422-residue protein sequence, read N- to C-terminus: 5-methylthioadenosine/S-adenosylhomocysteine deaminase 1 (422 aa).

Zn(2+) contacts are provided by His56 and His58. Substrate contacts are provided by Glu85 and His174. Position 201 (His201) interacts with Zn(2+). The substrate site is built by Glu204 and Asp290. Asp290 lines the Zn(2+) pocket.

This sequence belongs to the metallo-dependent hydrolases superfamily. MTA/SAH deaminase family. The cofactor is Zn(2+).

It catalyses the reaction S-adenosyl-L-homocysteine + H2O + H(+) = S-inosyl-L-homocysteine + NH4(+). The enzyme catalyses S-methyl-5'-thioadenosine + H2O + H(+) = S-methyl-5'-thioinosine + NH4(+). In terms of biological role, catalyzes the deamination of 5-methylthioadenosine and S-adenosyl-L-homocysteine into 5-methylthioinosine and S-inosyl-L-homocysteine, respectively. Is also able to deaminate adenosine. This Archaeoglobus fulgidus (strain ATCC 49558 / DSM 4304 / JCM 9628 / NBRC 100126 / VC-16) protein is 5-methylthioadenosine/S-adenosylhomocysteine deaminase 1.